The primary structure comprises 285 residues: MLPATFKLCAGISYRHLRNMTGLRRTAAVALTHELEKLALVGPGPGKWINQIRRKSILLSSRLEEKTLNDVEMSYIKQGEEALKKSLNILGDQDGWKTEIVMENGDKVLSKVLPDIGKVFKLEAVVEKPLDNVYGELVDNMEKMGEWNPNVKEVKILQKIGKDTVITHEKAAETPGNIVGARDFVSVRCSKRRGSTCILAGMSTRFGGMPEQKGFVRGENGPTCMVLRPLAEDISKTKLTWLLSIDLKGWLPKSIINQVLSQTQVDFAKHLRSRMTSSSNALSLC.

The region spanning 67 to 280 (TLNDVEMSYI…LRSRMTSSSN (214 aa)) is the START domain.

In terms of assembly, may interact with TSPO.

It localises to the mitochondrion. It carries out the reaction cholesterol(in) = cholesterol(out). It functions in the pathway steroid metabolism; cholesterol metabolism. Its function is as follows. Plays a key role in steroid hormone synthesis by enhancing the metabolism of cholesterol into pregnenolone. Mediates the transfer of cholesterol from the outer mitochondrial membrane to the inner mitochondrial membrane where it is cleaved to pregnenolone. The protein is Steroidogenic acute regulatory protein (star) of Xenopus laevis (African clawed frog).